The primary structure comprises 110 residues: UPF0213 protein DVU_3309 (110 aa).

The GIY-YIG domain maps to 8–83 (EVWFVYLLRC…KRQPTDQKLA (76 aa)).

The protein belongs to the UPF0213 family.

This Nitratidesulfovibrio vulgaris (strain ATCC 29579 / DSM 644 / CCUG 34227 / NCIMB 8303 / VKM B-1760 / Hildenborough) (Desulfovibrio vulgaris) protein is UPF0213 protein DVU_3309.